The primary structure comprises 358 residues: D-alanine--D-alanine ligase (358 aa).

Residues 136–341 (KYILQAAGVP…YGDLIEELIQ (206 aa)) enclose the ATP-grasp domain. Residue 169–224 (EGSLLYPMFVKPANMGSSVGISKAENREELQNALALAYQYDSRAIVEQGIEAREIE) coordinates ATP. D295, E308, and N310 together coordinate Mg(2+).

It belongs to the D-alanine--D-alanine ligase family. Mg(2+) is required as a cofactor. Requires Mn(2+) as cofactor.

Its subcellular location is the cytoplasm. The catalysed reaction is 2 D-alanine + ATP = D-alanyl-D-alanine + ADP + phosphate + H(+). Its pathway is cell wall biogenesis; peptidoglycan biosynthesis. Its function is as follows. Cell wall formation. This Enterococcus hirae (strain ATCC 9790 / DSM 20160 / JCM 8729 / LMG 6399 / NBRC 3181 / NCIMB 6459 / NCDO 1258 / NCTC 12367 / WDCM 00089 / R) protein is D-alanine--D-alanine ligase.